Reading from the N-terminus, the 551-residue chain is Cation/acetate symporter ActP (551 aa).

Transmembrane regions (helical) follow at residues 5–25 (HWSA…ALTG), 34–54 (IQAI…TYWA), 77–97 (GLAI…SALV), 104–124 (GLIY…LIAE), 150–170 (LSAC…MVGA), 184–204 (VAVV…GMLA), 207–227 (WVQI…AIMV), 263–283 (ISAL…PHIL), 304–324 (GFIG…ILLV), 356–376 (FFLG…VAGL), 406–426 (VSKI…ILFE), 430–450 (IAFM…PIII), 469–489 (LGLS…VTIL), and 498–518 (YEYP…FFSI).

Belongs to the sodium:solute symporter (SSF) (TC 2.A.21) family.

Its subcellular location is the cell inner membrane. In terms of biological role, transports acetate. The polypeptide is Cation/acetate symporter ActP (Yersinia pestis bv. Antiqua (strain Antiqua)).